Consider the following 85-residue polypeptide: BmK AGP-SYPU2 (85 aa).

Residues 1–19 (MNYMVIISLALLVMTGVES) form the signal peptide. The LCN-type CS-alpha/beta domain maps to 21–83 (KDGYIADDRN…ARIMKPGRCN (63 aa)). 4 disulfides stabilise this stretch: C31–C82, C35–C55, C41–C65, and C45–C67.

Belongs to the long (4 C-C) scorpion toxin superfamily. Sodium channel inhibitor family. Alpha subfamily. Expressed by the venom gland.

The protein resides in the secreted. Its function is as follows. Alpha toxins bind voltage-independently at site-3 of sodium channels (Nav) and inhibit the inactivation of the activated channels, thereby blocking neuronal transmission. Shows analgesic activity when intraperitoneally injected into mice. The sequence is that of BmK AGP-SYPU2 from Olivierus martensii (Manchurian scorpion).